The following is a 1187-amino-acid chain: DNA-directed RNA polymerase subunit beta (1187 aa).

The disordered stretch occupies residues 1150-1187 (KDEDDDPASSADDLGFNIGARPDAAAKEDQKAEEPEYQ). Residues 1173-1187 (AAAKEDQKAEEPEYQ) are compositionally biased toward basic and acidic residues.

This sequence belongs to the RNA polymerase beta chain family. As to quaternary structure, the RNAP catalytic core consists of 2 alpha, 1 beta, 1 beta' and 1 omega subunit. When a sigma factor is associated with the core the holoenzyme is formed, which can initiate transcription.

The catalysed reaction is RNA(n) + a ribonucleoside 5'-triphosphate = RNA(n+1) + diphosphate. Functionally, DNA-dependent RNA polymerase catalyzes the transcription of DNA into RNA using the four ribonucleoside triphosphates as substrates. This chain is DNA-directed RNA polymerase subunit beta, found in Bifidobacterium longum (strain DJO10A).